The primary structure comprises 192 residues: Ribosome maturation factor RimM (192 aa).

One can recognise a PRC barrel domain in the interval 97 to 172 (EDEYYLADLI…VVLADPPALV (76 aa)). A disordered region spans residues 168 to 192 (PPALVGEPEGPESPAEDDDGERHYD).

Belongs to the RimM family. In terms of assembly, binds ribosomal protein uS19.

It is found in the cytoplasm. An accessory protein needed during the final step in the assembly of 30S ribosomal subunit, possibly for assembly of the head region. Essential for efficient processing of 16S rRNA. May be needed both before and after RbfA during the maturation of 16S rRNA. It has affinity for free ribosomal 30S subunits but not for 70S ribosomes. This is Ribosome maturation factor RimM from Caulobacter sp. (strain K31).